Here is a 407-residue protein sequence, read N- to C-terminus: Imidazolonepropionase (407 aa).

The Fe(3+) site is built by His-74 and His-76. Positions 74 and 76 each coordinate Zn(2+). Positions 83, 146, and 179 each coordinate 4-imidazolone-5-propanoate. Residue Tyr-146 coordinates N-formimidoyl-L-glutamate. His-244 lines the Fe(3+) pocket. His-244 is a Zn(2+) binding site. Gln-247 is a binding site for 4-imidazolone-5-propanoate. Asp-319 serves as a coordination point for Fe(3+). Asp-319 contributes to the Zn(2+) binding site. The N-formimidoyl-L-glutamate site is built by Asn-321 and Gly-323. Thr-324 provides a ligand contact to 4-imidazolone-5-propanoate.

Belongs to the metallo-dependent hydrolases superfamily. HutI family. The cofactor is Zn(2+). Fe(3+) serves as cofactor.

The protein localises to the cytoplasm. The catalysed reaction is 4-imidazolone-5-propanoate + H2O = N-formimidoyl-L-glutamate. It participates in amino-acid degradation; L-histidine degradation into L-glutamate; N-formimidoyl-L-glutamate from L-histidine: step 3/3. Its function is as follows. Catalyzes the hydrolytic cleavage of the carbon-nitrogen bond in imidazolone-5-propanoate to yield N-formimidoyl-L-glutamate. It is the third step in the universal histidine degradation pathway. The chain is Imidazolonepropionase from Salmonella typhi.